A 188-amino-acid polypeptide reads, in one-letter code: Elongation factor P (188 aa).

The protein belongs to the elongation factor P family.

The protein resides in the cytoplasm. The protein operates within protein biosynthesis; polypeptide chain elongation. Its function is as follows. Involved in peptide bond synthesis. Stimulates efficient translation and peptide-bond synthesis on native or reconstituted 70S ribosomes in vitro. Probably functions indirectly by altering the affinity of the ribosome for aminoacyl-tRNA, thus increasing their reactivity as acceptors for peptidyl transferase. In Methylobacterium sp. (strain 4-46), this protein is Elongation factor P.